The chain runs to 277 residues: S-formylglutathione hydrolase FrmB (277 aa).

Residues serine 145, aspartate 221, and histidine 254 each act as charge relay system in the active site.

It belongs to the esterase D family.

The catalysed reaction is S-formylglutathione + H2O = formate + glutathione + H(+). Functionally, serine hydrolase involved in the detoxification of formaldehyde. Hydrolyzes S-formylglutathione to glutathione and formate. The chain is S-formylglutathione hydrolase FrmB (frmB) from Escherichia coli O6:H1 (strain CFT073 / ATCC 700928 / UPEC).